Reading from the N-terminus, the 3032-residue chain is DmX-like protein 2 (3032 aa).

WD repeat units follow at residues 108–145, 167–207, and 230–278; these read FLSSVTYNLAWDPQDNRLLTATDSIQLWAPPGGDILEE, KTSV…KSSI, and AHPR…EDCL. A Phosphoserine modification is found at Ser-326. Positions 418–486 are disordered; sequence QLDHESDDAD…HPRPSISMPL (69 aa). Residues 422–434 show a composition bias toward acidic residues; it reads ESDDADREDEERS. Basic and acidic residues predominate over residues 435-474; sequence QDERERGLRMKLDHELSLDRESEAGTGSSEHEDGEREGSP. Residue Ser-473 is modified to Phosphoserine. A WD 4 repeat occupies 492-532; sequence DRKIETLLTEWNKNPDMLFTIHPVDGTFLVWHVKYLDEYNP. A disordered region spans residues 577-598; the sequence is PSQQEMMSVDSPHGSQLHSPSH. Ser-587 is subject to Phosphoserine. Over residues 589 to 598 the composition is skewed to polar residues; the sequence is HGSQLHSPSH. 3 WD repeats span residues 594-633, 750-802, and 879-921; these read HSPSHSTDMNILAPTVMMVSKHIDGSLNQWAVTFADKSAF, LHTS…RKLL, and QPSQ…VQAC. Residues 937–958 form a disordered region; it reads VPGQKNLDSSPETSSSMSSVPH. Residues Ser-945 and Ser-946 each carry the phosphoserine modification. Over residues 945-958 the composition is skewed to low complexity; it reads SSPETSSSMSSVPH. One copy of the WD 8 repeat lies at 1001–1038; the sequence is LSSSSIYPVCLAPYLVVTTCSDNKVRFWKCCMETNSLG. Residues Ser-1141, Ser-1144, and Ser-1152 each carry the phosphoserine modification. 2 WD repeats span residues 1164-1205 and 1245-1285; these read PNIK…VSDQ and GTPS…GNVD. 2 positions are modified to phosphoserine: Ser-1288 and Ser-1399. Thr-1416 is subject to Phosphothreonine. A disordered region spans residues 1443–1464; sequence RISEDSTKKPQSYEDHIESQSE. Residues 1444–1461 show a composition bias toward basic and acidic residues; that stretch reads ISEDSTKKPQSYEDHIES. Ser-1856 bears the Phosphoserine mark. The disordered stretch occupies residues 1922-1953; that stretch reads QLDSVSGRMENGPSESKPVSRSDGGSGADWSA. The residue at position 2017 (Thr-2017) is a Phosphothreonine. Residues 2117–2146 are a coiled coil; that stretch reads GSYERHQIERRRLQAKREHAERRKLWLQKN. 2 positions are modified to phosphoserine: Ser-2394 and Ser-2636. The span at 2722-2732 shows a compositional bias: low complexity; it reads QPGAASHSSSQ. The segment at 2722 to 2744 is disordered; that stretch reads QPGAASHSSSQPHPPPSLPWLGS. WD repeat units follow at residues 2757–2796, 2800–2839, 2846–2888, 2894–2933, 2936–2975, and 2988–3026; these read RNLHNVKRMTSHPVHQYYLTGAQDGSVRMFEWTRPQQLVC, AGNARVTRLYFNSQGNKCGVADGEGFLSIWQVNQTASNPK, CHSK…GNSL, CHDHGATVLQYAPKQQLLISGGRKGYICIFDIRQRQLIHT, AHDSAIKALALDSCEEYFTTGSAEGNIKVWRLTGHGLIHS, and NIGAGVMQIAISQDNRLFSCGADGTLKTRVLPSAFNIPN.

As to quaternary structure, interacts with MADD and RAB3GAP. In terms of tissue distribution, expressed in the brain and pituitary gland. Detected in the hippocampus, dentate gyrus, hypothalamus, pyriform cortex and the granular and molecular layers of the cerebellum of adult animals. In the hypothalamus, expression is observed in the arcuate nucleus, the ME, the organum vasculosum of the lamina terminalis, and the subfornical organ, the subcommissural organ, and the suprachiasmatic nucleus. Both tanycytes and hypothalamic neurosecretory neurons express the protein. Expressed in the inner and outer hair cells as well as in the spiral ganglion neurons. Expressed in insulin-secreting cells of the islets of Langerhans in the pancreas.

The protein localises to the cytoplasmic vesicle. It localises to the secretory vesicle. Its subcellular location is the synaptic vesicle membrane. The protein resides in the neuronal dense core vesicle. May serve as a scaffold protein for MADD and RAB3GA on synaptic vesicles of neuronal and endocrine homeostatic processes. Plays a role in the brain as a key controller of neuronal and endocrine homeostatic processes. This Mus musculus (Mouse) protein is DmX-like protein 2 (Dmxl2).